Here is a 1082-residue protein sequence, read N- to C-terminus: M cell-type agglutination protein mam3 (1082 aa).

A signal peptide spans 1 to 18 (MSIALAFFILVLLGFSWA). Residues Asn28, Asn56, and Asn82 are each glycosylated (N-linked (GlcNAc...) asparagine). The tract at residues 353–374 (TSSSSTDQLTSASPISSSVISP) is disordered. 8 N-linked (GlcNAc...) asparagine glycosylation sites follow: Asn451, Asn475, Asn495, Asn520, Asn548, Asn588, Asn613, and Asn638. 11 repeat units span residues 646–681 (QTTTEYTTSGSVGFTTTLATQSGSVPGTVLVDVPTP), 682–717 (SWITETVTSGSVGFTTTIATPIGTTAGTVLVDIPTP), 718–753 (SWVTETVTSGSIGFTTTIATPIGSTAGTVLVDVPTP), 754–789 (SWVTETVTSGSVGFTTTIATPIGSTAGTVLVDIPTP), 790–825 (SWVTETVTSGSVGFTTTIATPVGTTAGTVLVDIPTP), 826–861 (SWVTETVTSGSVGFTTTIATPVGTTAGTVVVDVPTP), 862–897 (SWVTETVTSGSVGFTTTIATPIGSTAGTVLVDIPTP), 898–933 (SWVTETVTSGSVGFTTTIATPVGTTAGTVLVDIPTP), 934–969 (SWVTETVTSGSVGFTTTIATPIGTTAGTVLVDIPTP), 970–1005 (SWVTETVTSGSVGFTTTIATPVGTTAGTVLVDIPTP), and 1006–1041 (SWVTETVTSGSVGFTTTIATPIGTTAGTVLVDIPQQ). Residues 720–1043 (VTETVTSGSI…VLVDIPQQHA (324 aa)) form an 11 X 36 AA approximate tandem repeats region.

The protein belongs to the mam3/map4 family.

It is found in the cell surface. M cell-type specific protein involved in agglutination during conjugation. In Schizosaccharomyces pombe (strain 972 / ATCC 24843) (Fission yeast), this protein is M cell-type agglutination protein mam3.